A 325-amino-acid chain; its full sequence is Glutarate 2-hydroxylase (325 aa).

Positions 160, 162, and 292 each coordinate Fe cation.

This sequence belongs to the glutarate hydroxylase family. In terms of assembly, homotetramer. It depends on Fe(2+) as a cofactor.

The catalysed reaction is glutarate + 2-oxoglutarate + O2 = (S)-2-hydroxyglutarate + succinate + CO2. The protein operates within amino-acid degradation. In terms of biological role, acts as an alpha-ketoglutarate-dependent dioxygenase catalyzing hydroxylation of glutarate (GA) to L-2-hydroxyglutarate (L2HG). Functions in a L-lysine degradation pathway that proceeds via cadaverine, glutarate and L-2-hydroxyglutarate. The sequence is that of Glutarate 2-hydroxylase from Escherichia coli O127:H6 (strain E2348/69 / EPEC).